A 331-amino-acid chain; its full sequence is Glutaminase (331 aa).

Substrate contacts are provided by Ser77, Asn129, Glu173, Asn180, Tyr204, Tyr256, and Val274.

The protein belongs to the glutaminase family. Homotetramer.

The catalysed reaction is L-glutamine + H2O = L-glutamate + NH4(+). The polypeptide is Glutaminase (Oceanobacillus iheyensis (strain DSM 14371 / CIP 107618 / JCM 11309 / KCTC 3954 / HTE831)).